Consider the following 138-residue polypeptide: Large ribosomal subunit protein uL16 (138 aa).

The protein belongs to the universal ribosomal protein uL16 family. Part of the 50S ribosomal subunit.

In terms of biological role, binds 23S rRNA and is also seen to make contacts with the A and possibly P site tRNAs. This chain is Large ribosomal subunit protein uL16, found in Chlamydia trachomatis serovar D (strain ATCC VR-885 / DSM 19411 / UW-3/Cx).